Consider the following 496-residue polypeptide: UDP-glycosyltransferase 73C3 (496 aa).

Residues S297, 357 to 359 (APQ), 374 to 382 (HCGWNSTLE), and 396 to 399 (FGDQ) contribute to the UDP-alpha-D-glucose site.

It belongs to the UDP-glycosyltransferase family.

The polypeptide is UDP-glycosyltransferase 73C3 (UGT73C3) (Arabidopsis thaliana (Mouse-ear cress)).